Consider the following 460-residue polypeptide: 3-ketoacyl-CoA synthase 7 (460 aa).

Residues 21–41 (FHQFLVASACVLIAVFGYYFF) form a helical membrane-spanning segment. In terms of domain architecture, FAE spans 38-328 (YYFFKPRCII…YIISFIQRKW (291 aa)). Residues C183, H262, H345, H349, and N382 contribute to the active site.

It belongs to the thiolase-like superfamily. Chalcone/stilbene synthases family. In terms of tissue distribution, expressed in flowers.

The protein localises to the membrane. It carries out the reaction a very-long-chain acyl-CoA + malonyl-CoA + H(+) = a very-long-chain 3-oxoacyl-CoA + CO2 + CoA. The protein operates within lipid metabolism; fatty acid biosynthesis. This Arabidopsis thaliana (Mouse-ear cress) protein is 3-ketoacyl-CoA synthase 7.